Consider the following 323-residue polypeptide: Fructose-1,6-bisphosphatase class 1 (323 aa).

Residues Glu-84, Asp-103, Leu-105, and Asp-106 each coordinate Mg(2+). Substrate contacts are provided by residues 106-109 (DGSS), Asn-198, and Lys-264. Mg(2+) is bound at residue Glu-270.

Belongs to the FBPase class 1 family. As to quaternary structure, homotetramer. Mg(2+) serves as cofactor.

The protein resides in the cytoplasm. It catalyses the reaction beta-D-fructose 1,6-bisphosphate + H2O = beta-D-fructose 6-phosphate + phosphate. The protein operates within carbohydrate biosynthesis; gluconeogenesis. This Pseudoalteromonas atlantica (strain T6c / ATCC BAA-1087) protein is Fructose-1,6-bisphosphatase class 1.